The chain runs to 270 residues: Indole-3-glycerol phosphate synthase (270 aa).

The protein belongs to the TrpC family.

It carries out the reaction 1-(2-carboxyphenylamino)-1-deoxy-D-ribulose 5-phosphate + H(+) = (1S,2R)-1-C-(indol-3-yl)glycerol 3-phosphate + CO2 + H2O. Its pathway is amino-acid biosynthesis; L-tryptophan biosynthesis; L-tryptophan from chorismate: step 4/5. This Salinibacter ruber (strain DSM 13855 / M31) protein is Indole-3-glycerol phosphate synthase.